Reading from the N-terminus, the 332-residue chain is Isopentenyl-diphosphate delta-isomerase (332 aa).

6-7 (RK) is a substrate binding site. FMN-binding positions include 65-67 (AMT), Ser-95, and Asn-123. Substrate is bound at residue 95-97 (SGR). Gln-157 contributes to the substrate binding site. Glu-158 contributes to the Mg(2+) binding site. Residues Lys-187, Thr-217, 264–266 (GVY), Ala-285, and 285–286 (AR) each bind FMN.

It belongs to the IPP isomerase type 2 family. In terms of assembly, homooctamer. Dimer of tetramers. FMN serves as cofactor. The cofactor is NADPH. Requires Mg(2+) as cofactor.

It localises to the cytoplasm. It carries out the reaction isopentenyl diphosphate = dimethylallyl diphosphate. With respect to regulation, competitively inhibited by N,N-dimethyl-2-amino-1-ethyl diphosphate (NIPP) and isopentyl diphosphate. Functionally, involved in the biosynthesis of isoprenoids. Catalyzes the 1,3-allylic rearrangement of the homoallylic substrate isopentenyl (IPP) to its allylic isomer, dimethylallyl diphosphate (DMAPP). The protein is Isopentenyl-diphosphate delta-isomerase of Thermus thermophilus (strain ATCC BAA-163 / DSM 7039 / HB27).